The primary structure comprises 198 residues: Ribosome maturation factor RimP (198 aa).

The protein belongs to the RimP family.

Its subcellular location is the cytoplasm. Functionally, required for maturation of 30S ribosomal subunits. This chain is Ribosome maturation factor RimP, found in Rhizobium etli (strain ATCC 51251 / DSM 11541 / JCM 21823 / NBRC 15573 / CFN 42).